A 912-amino-acid chain; its full sequence is Phosphatidylinositol-3-phosphatase SAC1 (912 aa).

A disordered region spans residues 1 to 29; the sequence is MAKSENSTTSTFSSFANKIQPSNDAESDP. The SAC domain occupies 173 to 575; it reads LSSVDLTKDF…GDALAQQYGG (403 aa). The Phosphatase catalytic core motif lies at 511–522; sequence RTNCIDCLDRTN. The interval 715-912 is required for subcellular localization; that stretch reads RPGGNTGSTG…VGDDKVPKVI (198 aa). Residues 740 to 766 form a disordered region; that stretch reads LFGSRKPEESSSATKSGADDSEKGVTS.

In terms of assembly, component of the PI(3,5)P2 regulatory complex at least composed of ATG18, SAC/FIG4, FAB1 and VAC14. It depends on Mg(2+) as a cofactor. As to expression, ubiquitous with higher expression level in both young elongating and nonelongating stems. Detected in vascular tissues.

Its subcellular location is the vacuole membrane. It is found in the golgi apparatus. It catalyses the reaction a 1,2-diacyl-sn-glycero-3-phospho-(1D-myo-inositol-3-phosphate) + H2O = a 1,2-diacyl-sn-glycero-3-phospho-(1D-myo-inositol) + phosphate. It carries out the reaction a 1,2-diacyl-sn-glycero-3-phospho-(1D-myo-inositol-3,5-bisphosphate) + H2O = a 1,2-diacyl-sn-glycero-3-phospho-(1D-myo-inositol-3-phosphate) + phosphate. The catalysed reaction is a 1,2-diacyl-sn-glycero-3-phospho-(1D-myo-inositol 4-phosphate) + H2O = a 1,2-diacyl-sn-glycero-3-phospho-(1D-myo-inositol) + phosphate. Its function is as follows. Phosphoinositide phosphatase which catalyzes the hydrolysis of phosphatidylinositol-3,5-bisphosphate (PtdIns(3,5)P2). Can also catalyze the hydrolysis of phosphatidylinositol 3-phosphate (PtdIns(3)P) and phosphatidylinositol 4-phosphate (PtdIns(4)P). Required for normal cell morphogenesis, cell wall synthesis, and actin organization. The polypeptide is Phosphatidylinositol-3-phosphatase SAC1 (SAC1) (Arabidopsis thaliana (Mouse-ear cress)).